Here is a 159-residue protein sequence, read N- to C-terminus: Ribosomal RNA large subunit methyltransferase H (159 aa).

Residues leucine 76, glycine 108, and 127 to 132 (FSPMTF) each bind S-adenosyl-L-methionine.

Belongs to the RNA methyltransferase RlmH family. As to quaternary structure, homodimer.

It is found in the cytoplasm. It catalyses the reaction pseudouridine(1915) in 23S rRNA + S-adenosyl-L-methionine = N(3)-methylpseudouridine(1915) in 23S rRNA + S-adenosyl-L-homocysteine + H(+). Functionally, specifically methylates the pseudouridine at position 1915 (m3Psi1915) in 23S rRNA. This chain is Ribosomal RNA large subunit methyltransferase H, found in Alkaliphilus oremlandii (strain OhILAs) (Clostridium oremlandii (strain OhILAs)).